A 302-amino-acid polypeptide reads, in one-letter code: N-acetylmuramic acid 6-phosphate etherase (302 aa).

The SIS domain occupies Val-57 to Lys-220. Catalysis depends on Glu-85, which acts as the Proton donor. Residue Glu-116 is part of the active site.

Belongs to the GCKR-like family. MurNAc-6-P etherase subfamily. Homodimer.

The enzyme catalyses N-acetyl-D-muramate 6-phosphate + H2O = N-acetyl-D-glucosamine 6-phosphate + (R)-lactate. It functions in the pathway amino-sugar metabolism; N-acetylmuramate degradation. Its function is as follows. Specifically catalyzes the cleavage of the D-lactyl ether substituent of MurNAc 6-phosphate, producing GlcNAc 6-phosphate and D-lactate. This chain is N-acetylmuramic acid 6-phosphate etherase, found in Clostridium acetobutylicum (strain ATCC 824 / DSM 792 / JCM 1419 / IAM 19013 / LMG 5710 / NBRC 13948 / NRRL B-527 / VKM B-1787 / 2291 / W).